A 325-amino-acid chain; its full sequence is Lactonase drp35 (325 aa).

The Ca(2+) site is built by Glu-46, Thr-108, Gly-110, Asp-128, Thr-131, Tyr-133, Asp-136, Asn-183, Asp-234, and Ser-235. Asp-234 serves as the catalytic Proton donor.

This sequence belongs to the SMP-30/CGR1 family. It depends on Ca(2+) as a cofactor.

The protein localises to the cytoplasm. Its function is as follows. Exhibits lactonase activity. Acts in cells with perturbed membrane integrity and is possibly related to the membrane homeostasis. The polypeptide is Lactonase drp35 (drp35) (Staphylococcus epidermidis (strain ATCC 35984 / DSM 28319 / BCRC 17069 / CCUG 31568 / BM 3577 / RP62A)).